The primary structure comprises 289 residues: ATP synthase gamma chain (289 aa).

Belongs to the ATPase gamma chain family. As to quaternary structure, F-type ATPases have 2 components, CF(1) - the catalytic core - and CF(0) - the membrane proton channel. CF(1) has five subunits: alpha(3), beta(3), gamma(1), delta(1), epsilon(1). CF(0) has three main subunits: a, b and c.

It is found in the cell inner membrane. Its function is as follows. Produces ATP from ADP in the presence of a proton gradient across the membrane. The gamma chain is believed to be important in regulating ATPase activity and the flow of protons through the CF(0) complex. The polypeptide is ATP synthase gamma chain (Azoarcus sp. (strain BH72)).